The following is a 724-amino-acid chain: 4-alpha-glucanotransferase (724 aa).

The protein belongs to the disproportionating enzyme family.

It is found in the cytoplasm. The catalysed reaction is Transfers a segment of a (1-&gt;4)-alpha-D-glucan to a new position in an acceptor, which may be glucose or a (1-&gt;4)-alpha-D-glucan.. The polypeptide is 4-alpha-glucanotransferase (malQ) (Mycobacterium bovis (strain ATCC BAA-935 / AF2122/97)).